We begin with the raw amino-acid sequence, 358 residues long: tRNA-specific 2-thiouridylase MnmA (358 aa).

ATP contacts are provided by residues 8-15 (GLSGGVDS) and Met-34. The tract at residues 94–96 (NPD) is interaction with target base in tRNA. Residue Cys-99 is the Nucleophile of the active site. A disulfide bond links Cys-99 and Cys-196. ATP is bound at residue Gly-123. The interval 146-148 (KDQ) is interaction with tRNA. Residue Cys-196 is the Cysteine persulfide intermediate of the active site. An interaction with tRNA region spans residues 308–309 (RY).

Belongs to the MnmA/TRMU family.

It is found in the cytoplasm. It catalyses the reaction S-sulfanyl-L-cysteinyl-[protein] + uridine(34) in tRNA + AH2 + ATP = 2-thiouridine(34) in tRNA + L-cysteinyl-[protein] + A + AMP + diphosphate + H(+). Its function is as follows. Catalyzes the 2-thiolation of uridine at the wobble position (U34) of tRNA, leading to the formation of s(2)U34. This Thiobacillus denitrificans (strain ATCC 25259 / T1) protein is tRNA-specific 2-thiouridylase MnmA.